We begin with the raw amino-acid sequence, 395 residues long: S-adenosylmethionine synthase (395 aa).

Position 14 (His14) interacts with ATP. Residue Asp16 participates in Mg(2+) binding. Glu42 provides a ligand contact to K(+). 2 residues coordinate L-methionine: Glu55 and Gln98. The segment at 98 to 108 (QSPDIAMGVDK) is flexible loop. ATP contacts are provided by residues 175–177 (DGK), 242–243 (RF), Asp251, 257–258 (RK), Ala274, and Lys278. Asp251 lines the L-methionine pocket. Residue Lys282 participates in L-methionine binding.

It belongs to the AdoMet synthase family. Homotetramer; dimer of dimers. Requires Mg(2+) as cofactor. The cofactor is K(+).

The protein resides in the cytoplasm. It carries out the reaction L-methionine + ATP + H2O = S-adenosyl-L-methionine + phosphate + diphosphate. It functions in the pathway amino-acid biosynthesis; S-adenosyl-L-methionine biosynthesis; S-adenosyl-L-methionine from L-methionine: step 1/1. Catalyzes the formation of S-adenosylmethionine (AdoMet) from methionine and ATP. The overall synthetic reaction is composed of two sequential steps, AdoMet formation and the subsequent tripolyphosphate hydrolysis which occurs prior to release of AdoMet from the enzyme. This Thermosipho melanesiensis (strain DSM 12029 / CIP 104789 / BI429) protein is S-adenosylmethionine synthase.